A 292-amino-acid polypeptide reads, in one-letter code: NAD kinase (292 aa).

Aspartate 73 (proton acceptor) is an active-site residue. NAD(+) is bound by residues 73–74 (DG), 147–148 (NE), histidine 158, arginine 175, aspartate 177, 188–193 (TGYSLS), and glutamine 247.

Belongs to the NAD kinase family. Requires a divalent metal cation as cofactor.

It localises to the cytoplasm. It catalyses the reaction NAD(+) + ATP = ADP + NADP(+) + H(+). Functionally, involved in the regulation of the intracellular balance of NAD and NADP, and is a key enzyme in the biosynthesis of NADP. Catalyzes specifically the phosphorylation on 2'-hydroxyl of the adenosine moiety of NAD to yield NADP. The chain is NAD kinase from Buchnera aphidicola subsp. Schizaphis graminum (strain Sg).